The following is a 294-amino-acid chain: NAD kinase (294 aa).

The active-site Proton acceptor is the Asp-72. Residues 72 to 73 (DG), 146 to 147 (ND), Arg-157, Arg-174, Asp-176, 187 to 192 (TAYSLS), and Gln-247 contribute to the NAD(+) site.

It belongs to the NAD kinase family. It depends on a divalent metal cation as a cofactor.

It localises to the cytoplasm. It carries out the reaction NAD(+) + ATP = ADP + NADP(+) + H(+). In terms of biological role, involved in the regulation of the intracellular balance of NAD and NADP, and is a key enzyme in the biosynthesis of NADP. Catalyzes specifically the phosphorylation on 2'-hydroxyl of the adenosine moiety of NAD to yield NADP. This chain is NAD kinase, found in Marinobacter nauticus (strain ATCC 700491 / DSM 11845 / VT8) (Marinobacter aquaeolei).